The sequence spans 917 residues: Coiled-coil domain-containing protein 186 (917 aa).

Disordered stretches follow at residues 1-52 (MKIR…SGDE), 97-118 (SCAN…PGGD), and 701-769 (TQRR…SVAV). The segment covering 33–44 (TTEKTSELRDDS) has biased composition (basic and acidic residues). Residues 220–736 (RYLQQELTVK…TENGNHDKDI (517 aa)) are a coiled coil. A compositionally biased stretch (basic and acidic residues) spans 722-736 (RKLEQTENGNHDKDI). Positions 737 to 748 (SSMGSRSSSSGS) are enriched in low complexity. Residue Ser759 is modified to Phosphoserine. 2 coiled-coil regions span residues 778-822 (AMLI…IQSY) and 874-913 (KLQA…LEQR).

Expressed in postnatal germ cells.

This chain is Coiled-coil domain-containing protein 186 (Ccdc186), found in Mus musculus (Mouse).